An 837-amino-acid polypeptide reads, in one-letter code: Translation initiation factor IF-2 (837 aa).

The disordered stretch occupies residues 94 to 253 (KRSPDEIEAE…QHGFQNPTGP (160 aa)). The segment covering 95–148 (RSPDEIEAERQRELEEQRAAEEAERLKAEEAAARQRAEEEARKAEEAARAKAAE) has biased composition (basic and acidic residues). Residues 149–171 (EAVSAQPAAAVEVAAAEPVAKPA) are compositionally biased toward low complexity. 2 stretches are compositionally biased toward basic and acidic residues: residues 172–188 (AAEE…PKRD) and 220–229 (STDEESDGYR). Over residues 230-244 (RGGRGGKSKLKKRNQ) the composition is skewed to basic residues. The 170-residue stretch at 337-506 (TRAPVVTVMG…LLQAEVLELK (170 aa)) folds into the tr-type G domain. Positions 346 to 353 (GHVDHGKT) are G1. A GTP-binding site is contributed by 346–353 (GHVDHGKT). Residues 371-375 (GITQH) are G2. Positions 392 to 395 (DTPG) are G3. GTP-binding positions include 392–396 (DTPGH) and 446–449 (NKID). The G4 stretch occupies residues 446–449 (NKID). The tract at residues 482 to 484 (SAK) is G5.

It belongs to the TRAFAC class translation factor GTPase superfamily. Classic translation factor GTPase family. IF-2 subfamily.

The protein resides in the cytoplasm. In terms of biological role, one of the essential components for the initiation of protein synthesis. Protects formylmethionyl-tRNA from spontaneous hydrolysis and promotes its binding to the 30S ribosomal subunits. Also involved in the hydrolysis of GTP during the formation of the 70S ribosomal complex. This Pseudomonas paraeruginosa (strain DSM 24068 / PA7) (Pseudomonas aeruginosa (strain PA7)) protein is Translation initiation factor IF-2.